The primary structure comprises 291 residues: Protein CMSS1 (291 aa).

The disordered stretch occupies residues 1–96 (MADDLGDEWW…KKTITDVLTS (96 aa)). Residues 17-27 (DVPEVEEETEH) show a composition bias toward acidic residues. Basic and acidic residues predominate over residues 58 to 79 (VKKECFITQERSEEKPDNESNK).

Belongs to the CMS1 family.

The polypeptide is Protein CMSS1 (cmss1) (Danio rerio (Zebrafish)).